The chain runs to 96 residues: Protein RSI-1 (96 aa).

A signal peptide spans 1–29 (MAKSGYNASFLLLISMFLILLTFSNVVEG).

This sequence belongs to the GASA family. Post-translationally, six disulfide bonds may be present. In terms of tissue distribution, expressed very early in lateral root development.

It localises to the secreted. The sequence is that of Protein RSI-1 (RSI-1) from Solanum lycopersicum (Tomato).